Consider the following 184-residue polypeptide: Photosystem I assembly protein Ycf4 (184 aa).

The next 2 helical transmembrane spans lie at phenylalanine 22–serine 42 and isoleucine 57–serine 77.

It belongs to the Ycf4 family.

The protein resides in the plastid. It is found in the chloroplast thylakoid membrane. Functionally, seems to be required for the assembly of the photosystem I complex. This chain is Photosystem I assembly protein Ycf4, found in Lobularia maritima (Sweet alyssum).